Reading from the N-terminus, the 156-residue chain is ATP synthase subunit b (156 aa).

The chain crosses the membrane as a helical span at residues 7 to 27; sequence LFAQMVVFLILAWFTMKFVWP.

It belongs to the ATPase B chain family. F-type ATPases have 2 components, F(1) - the catalytic core - and F(0) - the membrane proton channel. F(1) has five subunits: alpha(3), beta(3), gamma(1), delta(1), epsilon(1). F(0) has three main subunits: a(1), b(2) and c(10-14). The alpha and beta chains form an alternating ring which encloses part of the gamma chain. F(1) is attached to F(0) by a central stalk formed by the gamma and epsilon chains, while a peripheral stalk is formed by the delta and b chains.

It is found in the cell inner membrane. F(1)F(0) ATP synthase produces ATP from ADP in the presence of a proton or sodium gradient. F-type ATPases consist of two structural domains, F(1) containing the extramembraneous catalytic core and F(0) containing the membrane proton channel, linked together by a central stalk and a peripheral stalk. During catalysis, ATP synthesis in the catalytic domain of F(1) is coupled via a rotary mechanism of the central stalk subunits to proton translocation. In terms of biological role, component of the F(0) channel, it forms part of the peripheral stalk, linking F(1) to F(0). This is ATP synthase subunit b from Paraburkholderia xenovorans (strain LB400).